We begin with the raw amino-acid sequence, 394 residues long: Olfactomedin-like protein 3B (394 aa).

The signal sequence occupies residues 1–18 (MKATIFFLLLTVLAHSRS). Residues 29-94 (LENRMLAMEE…RVDRVEREMD (66 aa)) adopt a coiled-coil conformation. Positions 132–383 (VCVNIISSLK…QILYKLELKK (252 aa)) constitute an Olfactomedin-like domain. C133 and C310 are oxidised to a cystine. N-linked (GlcNAc...) asparagine glycosylation is found at N169, N204, and N233.

It belongs to the OLFML3 family.

It is found in the secreted. Its function is as follows. Secreted scaffold protein that plays an essential role in dorsoventral patterning during early development. Stabilizes axial formation by restricting chordin (CHRD) activity on the dorsal side. Acts by facilitating the association between the tolloid proteases and their substrate chordin (CHRD), leading to enhance chordin (CHRD) degradation. The sequence is that of Olfactomedin-like protein 3B (olfml3b) from Danio rerio (Zebrafish).